Consider the following 92-residue polypeptide: Small ribosomal subunit protein uS19 (92 aa).

This sequence belongs to the universal ribosomal protein uS19 family.

Its function is as follows. Protein S19 forms a complex with S13 that binds strongly to the 16S ribosomal RNA. The sequence is that of Small ribosomal subunit protein uS19 from Caulobacter vibrioides (strain ATCC 19089 / CIP 103742 / CB 15) (Caulobacter crescentus).